The primary structure comprises 290 residues: Sodium/potassium-transporting ATPase subunit beta-2 (290 aa).

The Cytoplasmic portion of the chain corresponds to 1-39; it reads MVIQKEKKSCGQVVEEWKEFVWNPRTHQFMGRTGTSWAF. The chain crosses the membrane as a helical; Signal-anchor for type II membrane protein span at residues 40–67; sequence ILLFYLVFYGFLTAMFTLTMWVMLQTVS. The Extracellular portion of the chain corresponds to 68–290; that stretch reads DHTPKYQDRL…VAFKLRINKT (223 aa). Residues Asn96 and Asn118 are each glycosylated (N-linked (GlcNAc...) asparagine). The cysteines at positions 129 and 150 are disulfide-linked. Asn153 is a glycosylation site (N-linked (GlcNAc...) asparagine). A disulfide bridge links Cys160 with Cys177. Residues Asn193, Asn197, and Asn238 are each glycosylated (N-linked (GlcNAc...) asparagine). The interval 193–289 is immunoglobulin-like; it reads NQSMNVTCVG…RVAFKLRINK (97 aa). Residues Cys200 and Cys261 are joined by a disulfide bond.

The protein belongs to the X(+)/potassium ATPases subunit beta family. As to quaternary structure, the sodium/potassium-transporting ATPase is composed of a catalytic alpha subunit, an auxiliary non-catalytic beta subunit and an additional regulatory subunit. Interacts with BSG.

It is found in the cell membrane. In terms of biological role, this is the non-catalytic component of the active enzyme, which catalyzes the hydrolysis of ATP coupled with the exchange of Na(+) and K(+) ions across the plasma membrane. The exact function of the beta-2 subunit is not known. Mediates cell adhesion of neurons and astrocytes, and promotes neurite outgrowth. This is Sodium/potassium-transporting ATPase subunit beta-2 (ATP1B2) from Bos taurus (Bovine).